The following is a 568-amino-acid chain: MDQDAFFFERDPEAEGEAPRKQESLSDVIGLLDVVLSYKPTEIGEDRSWLHNIIDNPKENKSSCKSDDNNKDRAISTSTQDHRSSEESGISRRTGESKTETHARILDQQGIHRASRRGTSPNPLPENMGDERNTRIDEDSPNERRHQRSVPTDEDRKMAENSNKREEDQVEGFPEEVRGSTSLSDDGEGRTNNNGRSMETSSTHSTRITDVITNPSPELEEAVLQRKKRRPTTIKRNQTRSERTQNSELHKSTSGDSSNLEDHNTKTSQKIPPSKNEEPAVTQKNNHNHRKTKHTTNNANNNAKCLPTPEHDTTSNEEGTSNTSVDEMAKLLVSLGVMKSQHEFELSRRASHQFAKRMLKSANYKEMTFNLCGMLLSVEKSLGNKVEENRTLLKQIQEEIDSSRDLHKRFSEYQKEQNSLMMANLSTLHIITDRGGKTGDPSDTTRSPSVFTKGKDNKVKKTRFDPSMEALGGQEFKPDLIREDELREDIRNPVLEEHNNEPQASNASRLIPSTEKHTLHSLKLVIENSPLSRVEKKAYIKSLYKCRTNQEVKNVMELFEEDIDSLTN.

The tract at residues 1–24 (MDQDAFFFERDPEAEGEAPRKQES) is disordered. The span at 7 to 24 (FFERDPEAEGEAPRKQES) shows a compositional bias: basic and acidic residues. The interval 33 to 41 (DVVLSYKPT) is N0 binding. Positions 45-324 (EDRSWLHNII…SNEEGTSNTS (280 aa)) are disordered. Basic and acidic residues-rich tracts occupy residues 56-105 (NPKE…HARI), 129-144 (GDER…PNER), and 151-167 (PTDE…KREE). Polar residues predominate over residues 179-216 (GSTSLSDDGEGRTNNNGRSMETSSTHSTRITDVITNPS). Over residues 239–253 (TRSERTQNSELHKST) the composition is skewed to basic and acidic residues. The span at 295-304 (TTNNANNNAK) shows a compositional bias: low complexity. The multimerization stretch occupies residues 344–411 (FELSRRASHQ…SSRDLHKRFS (68 aa)). Positions 387–416 (EENRTLLKQIQEEIDSSRDLHKRFSEYQKE) form a coiled coil. The l protein binding stretch occupies residues 412 to 445 (EYQKEQNSLMMANLSTLHIITDRGGKTGDPSDTT). Disordered regions lie at residues 434–455 (RGGK…TKGK) and 493–513 (PVLE…LIPS). Residues 441 to 450 (PSDTTRSPSV) are compositionally biased toward polar residues. The interaction with the nucleocapsid (N-RNA) stretch occupies residues 479 to 568 (DLIREDELRE…FEEDIDSLTN (90 aa)).

Belongs to the respirovirus P protein family. As to quaternary structure, homotetramer. Interacts (via multimerization domain) with polymerase L; this interaction forms the polymerase complex. Interacts (via N-terminus) with N0; this interaction allows P to chaperon N0 before encapsidation and form the N-P complex. Interacts (via C-terminus) with N-RNA template; this interaction positions the polymerase on the template.

In terms of biological role, essential cofactor of the RNA polymerase L that plays a central role in the transcription and replication by forming the polymerase complex with RNA polymerase L and recruiting L to the genomic N-RNA template for RNA synthesis. Also plays a central role in the encapsidation of nascent RNA chains by forming the encapsidation complex with the nucleocapsid protein N (N-P complex). Acts as a chaperone for newly synthesized free N protein, so-called N0, allowing encapsidation of nascent RNA chains during replication. The nucleoprotein protein N prevents excessive phosphorylation of P, which leads to down-regulation of viral transcription/ replication. Participates, together with N, in the formation of viral factories (viroplasms), which are large inclusions in the host cytoplasm where replication takes place. Recruits host PI4KB and remodel the host endoplasmic reticulum membrane to form viral replication factories. The chain is Phosphoprotein (P/C) from Homo sapiens (Human).